Reading from the N-terminus, the 135-residue chain is Glutaredoxin-C5 (135 aa).

The Glutaredoxin domain maps to 29 to 134; it reads AERVERLASE…PLLKEAGALW (106 aa). Cys49 and Cys52 are joined by a disulfide. Positions 132 to 135 match the Responsive for interaction with TGA factors motif; the sequence is ALWL.

This sequence belongs to the glutaredoxin family. CC-type subfamily.

Its subcellular location is the cytoplasm. It localises to the nucleus. Has a glutathione-disulfide oxidoreductase activity in the presence of NADPH and glutathione reductase. Reduces low molecular weight disulfides and proteins. The protein is Glutaredoxin-C5 (GRXC5) of Oryza sativa subsp. japonica (Rice).